Here is a 59-residue protein sequence, read N- to C-terminus: Large ribosomal subunit protein bL32C (59 aa).

It belongs to the bacterial ribosomal protein bL32 family.

This chain is Large ribosomal subunit protein bL32C (rpmF3), found in Enterococcus faecalis (strain ATCC 700802 / V583).